The following is a 154-amino-acid chain: Ribosome maturation factor RimP (154 aa).

Belongs to the RimP family.

It localises to the cytoplasm. Its function is as follows. Required for maturation of 30S ribosomal subunits. In Alkaliphilus oremlandii (strain OhILAs) (Clostridium oremlandii (strain OhILAs)), this protein is Ribosome maturation factor RimP.